Reading from the N-terminus, the 303-residue chain is Phosphatidylglycerol--prolipoprotein diacylglyceryl transferase (303 aa).

4 helical membrane passes run 18–38, 58–78, 106–126, and 133–153; these read LGPFSLRWYGLLIAISVLVGL, LLPILVLASVIGARIYYVAFE, IWGGGIAIHGALIMGTLSIIF, and EPFWDVIDVLVPSVALGQAIG. Residue Arg154 coordinates a 1,2-diacyl-sn-glycero-3-phospho-(1'-sn-glycerol). 3 helical membrane-spanning segments follow: residues 193–213, 223–243, and 266–286; these read PTFLYESVWNIFVFGILIFLF, LPPGSLSCLYLITYSLGRFWI, and IAQLISLFLISAGLLGIWRIY.

It belongs to the Lgt family.

Its subcellular location is the cell inner membrane. The catalysed reaction is L-cysteinyl-[prolipoprotein] + a 1,2-diacyl-sn-glycero-3-phospho-(1'-sn-glycerol) = an S-1,2-diacyl-sn-glyceryl-L-cysteinyl-[prolipoprotein] + sn-glycerol 1-phosphate + H(+). Its pathway is protein modification; lipoprotein biosynthesis (diacylglyceryl transfer). Catalyzes the transfer of the diacylglyceryl group from phosphatidylglycerol to the sulfhydryl group of the N-terminal cysteine of a prolipoprotein, the first step in the formation of mature lipoproteins. The polypeptide is Phosphatidylglycerol--prolipoprotein diacylglyceryl transferase (Prochlorococcus marinus (strain NATL1A)).